Consider the following 355-residue polypeptide: Histidinol-phosphate aminotransferase (355 aa).

K211 is modified (N6-(pyridoxal phosphate)lysine).

It belongs to the class-II pyridoxal-phosphate-dependent aminotransferase family. Histidinol-phosphate aminotransferase subfamily. As to quaternary structure, homodimer. Pyridoxal 5'-phosphate serves as cofactor.

It catalyses the reaction L-histidinol phosphate + 2-oxoglutarate = 3-(imidazol-4-yl)-2-oxopropyl phosphate + L-glutamate. Its pathway is amino-acid biosynthesis; L-histidine biosynthesis; L-histidine from 5-phospho-alpha-D-ribose 1-diphosphate: step 7/9. This is Histidinol-phosphate aminotransferase from Aeromonas salmonicida (strain A449).